Reading from the N-terminus, the 357-residue chain is Probable leucine aminopeptidase MCYG_04170 (357 aa).

An N-terminal signal peptide occupies residues methionine 1–alanine 15. N-linked (GlcNAc...) asparagine glycosylation occurs at asparagine 76. Positions 167 and 185 each coordinate Zn(2+). A glycan (N-linked (GlcNAc...) asparagine) is linked at asparagine 186. Zn(2+) contacts are provided by glutamate 224 and aspartate 251. Cysteine 291 and cysteine 295 are joined by a disulfide. Histidine 324 is a binding site for Zn(2+).

It belongs to the peptidase M28 family. M28E subfamily. As to quaternary structure, monomer. Requires Zn(2+) as cofactor.

It localises to the secreted. Its function is as follows. Probable extracellular aminopeptidase which contributes to pathogenicity. The polypeptide is Probable leucine aminopeptidase MCYG_04170 (Arthroderma otae (strain ATCC MYA-4605 / CBS 113480) (Microsporum canis)).